The following is a 219-amino-acid chain: Oxaloacetate tautomerase YcgM (219 aa).

Positions 70, 72, and 101 each coordinate Mg(2+).

It belongs to the FAH family. The cofactor is a divalent metal cation.

It catalyses the reaction oxaloacetate = enol-oxaloacetate. Functionally, tautomerase that converts enol-oxaloacetate to the keto form of oxaloacetate. In Escherichia coli (strain K12), this protein is Oxaloacetate tautomerase YcgM.